We begin with the raw amino-acid sequence, 135 residues long: MKNKPDQLKYSKYQKNRNKGFSTKRNYLIHGNYGLKSIENGFLNFKQIESARKMLIHFLGKSSKILIRVFPDKVLTKKPLEVRMGKGKGPIYDWVSVIKPGIILFEVLNFNYLIVKKAFYVASQKLSIKTEICYE.

This sequence belongs to the universal ribosomal protein uL16 family. In terms of assembly, part of the 50S ribosomal subunit.

Binds 23S rRNA and is also seen to make contacts with the A and possibly P site tRNAs. This Carsonella ruddii (strain PV) protein is Large ribosomal subunit protein uL16 (rplP).